Consider the following 331-residue polypeptide: Ketol-acid reductoisomerase (NADP(+)) (331 aa).

The region spanning 2 to 182 (ARLYYDADAN…GGTRAGILET (181 aa)) is the KARI N-terminal Rossmann domain. NADP(+) contacts are provided by residues 25 to 28 (YGSQ), serine 51, serine 53, and 83 to 86 (DEVQ). Residue histidine 108 is part of the active site. Glycine 134 is an NADP(+) binding site. Positions 183-328 (TFREETETDL…KDLRAMFSWL (146 aa)) constitute a KARI C-terminal knotted domain. Residues aspartate 191, glutamate 195, glutamate 227, and glutamate 231 each coordinate Mg(2+). Serine 252 is a binding site for substrate.

Belongs to the ketol-acid reductoisomerase family. Mg(2+) is required as a cofactor.

The catalysed reaction is (2R)-2,3-dihydroxy-3-methylbutanoate + NADP(+) = (2S)-2-acetolactate + NADPH + H(+). It catalyses the reaction (2R,3R)-2,3-dihydroxy-3-methylpentanoate + NADP(+) = (S)-2-ethyl-2-hydroxy-3-oxobutanoate + NADPH + H(+). Its pathway is amino-acid biosynthesis; L-isoleucine biosynthesis; L-isoleucine from 2-oxobutanoate: step 2/4. It functions in the pathway amino-acid biosynthesis; L-valine biosynthesis; L-valine from pyruvate: step 2/4. Its function is as follows. Involved in the biosynthesis of branched-chain amino acids (BCAA). Catalyzes an alkyl-migration followed by a ketol-acid reduction of (S)-2-acetolactate (S2AL) to yield (R)-2,3-dihydroxy-isovalerate. In the isomerase reaction, S2AL is rearranged via a Mg-dependent methyl migration to produce 3-hydroxy-3-methyl-2-ketobutyrate (HMKB). In the reductase reaction, this 2-ketoacid undergoes a metal-dependent reduction by NADPH to yield (R)-2,3-dihydroxy-isovalerate. This chain is Ketol-acid reductoisomerase (NADP(+)), found in Cyanothece sp. (strain PCC 7425 / ATCC 29141).